A 297-amino-acid polypeptide reads, in one-letter code: Transcriptional regulator protein Pur-beta (297 aa).

Disordered stretches follow at residues 1–26 (MADG…EQET) and 275–297 (QERH…VDDD). At alanine 2 the chain carries N-acetylalanine. The tract at residues 23–246 (EQETQELASK…LRVSEVKPSY (224 aa)) is DNA-binding. Basic and acidic residues predominate over residues 275–288 (QERHRDKMYERREE).

The protein belongs to the PUR DNA-binding protein family.

The protein resides in the nucleus. Its function is as follows. Transcriptional regulator which can act as an activator or a repressor. The sequence is that of Transcriptional regulator protein Pur-beta (purb) from Danio rerio (Zebrafish).